We begin with the raw amino-acid sequence, 566 residues long: Proline--tRNA ligase (566 aa).

This sequence belongs to the class-II aminoacyl-tRNA synthetase family. ProS type 1 subfamily. In terms of assembly, homodimer.

Its subcellular location is the cytoplasm. The enzyme catalyses tRNA(Pro) + L-proline + ATP = L-prolyl-tRNA(Pro) + AMP + diphosphate. Catalyzes the attachment of proline to tRNA(Pro) in a two-step reaction: proline is first activated by ATP to form Pro-AMP and then transferred to the acceptor end of tRNA(Pro). As ProRS can inadvertently accommodate and process non-cognate amino acids such as alanine and cysteine, to avoid such errors it has two additional distinct editing activities against alanine. One activity is designated as 'pretransfer' editing and involves the tRNA(Pro)-independent hydrolysis of activated Ala-AMP. The other activity is designated 'posttransfer' editing and involves deacylation of mischarged Ala-tRNA(Pro). The misacylated Cys-tRNA(Pro) is not edited by ProRS. The polypeptide is Proline--tRNA ligase (Bacillus cereus (strain AH187)).